The sequence spans 128 residues: UPF0325 protein YaeH (128 aa).

This sequence belongs to the UPF0325 family.

This chain is UPF0325 protein YaeH, found in Escherichia coli (strain ATCC 8739 / DSM 1576 / NBRC 3972 / NCIMB 8545 / WDCM 00012 / Crooks).